A 190-amino-acid polypeptide reads, in one-letter code: Large ribosomal subunit protein eL15 (190 aa).

It belongs to the eukaryotic ribosomal protein eL15 family.

This Nanoarchaeum equitans (strain Kin4-M) protein is Large ribosomal subunit protein eL15 (rpl15e).